A 329-amino-acid chain; its full sequence is MDAVKKAILGEVLEEEEAYEVMRALMAGEVSPVRAAGLLVALSLRGERPHEIAAMARAMREAARPLRVHRRPLLDIVGTGGDGKGLMNLSTLAALVAAAGGVAVAKHGNRAASSRAGSADLLEALGVDLEAPPERVGEAIEELGFGFLFARVFHPAMRHVAPVRAELGVRTVFNLLGPLTNPAGADAYVLGVFSPEWLAPMAEALERLGARGLVVHGEGADELVLGENRVVEVGKGAYALTPEEVGLKRAPLEALKGGGPEENAALARRLLKGEEKGPLADAVALAAGAGFYAAGKTPSLKEGVALAREVLASGEAYLLLERYVAFLRA.

5-phospho-alpha-D-ribose 1-diphosphate is bound by residues G78, 81 to 82, 88 to 91, 106 to 114, and S118; these read GD, NLST, and KHGNRAASS. G78 serves as a coordination point for anthranilate. Residue S90 participates in Mg(2+) binding. N109 is an anthranilate binding site. R164 contacts anthranilate. D221 and E222 together coordinate Mg(2+).

The protein belongs to the anthranilate phosphoribosyltransferase family. Homodimer. It depends on Mg(2+) as a cofactor.

It carries out the reaction N-(5-phospho-beta-D-ribosyl)anthranilate + diphosphate = 5-phospho-alpha-D-ribose 1-diphosphate + anthranilate. Its pathway is amino-acid biosynthesis; L-tryptophan biosynthesis; L-tryptophan from chorismate: step 2/5. Catalyzes the transfer of the phosphoribosyl group of 5-phosphorylribose-1-pyrophosphate (PRPP) to anthranilate to yield N-(5'-phosphoribosyl)-anthranilate (PRA). This is Anthranilate phosphoribosyltransferase from Thermus thermophilus (strain ATCC BAA-163 / DSM 7039 / HB27).